Reading from the N-terminus, the 345-residue chain is Hydroxymethylglutaryl-CoA synthase (345 aa).

D28 is a binding site for (3S)-3-hydroxy-3-methylglutaryl-CoA. Residue E80 is the Proton donor/acceptor of the active site. (3S)-3-hydroxy-3-methylglutaryl-CoA contacts are provided by C112 and T153. C112 functions as the Acyl-thioester intermediate in the catalytic mechanism. Residue R199 participates in CoA binding. Positions 201 and 234 each coordinate (3S)-3-hydroxy-3-methylglutaryl-CoA. Residue H234 is the Proton donor/acceptor of the active site. CoA is bound at residue K239. The (3S)-3-hydroxy-3-methylglutaryl-CoA site is built by R243, N266, and S296.

Belongs to the thiolase-like superfamily. Archaeal HMG-CoA synthase family. Interacts with acetoacetyl-CoA thiolase that catalyzes the precedent step in the pathway and with a DUF35 protein. The acetoacetyl-CoA thiolase/HMG-CoA synthase complex channels the intermediate via a fused CoA-binding site, which allows for efficient coupling of the endergonic thiolase reaction with the exergonic HMGCS reaction.

It catalyses the reaction acetoacetyl-CoA + acetyl-CoA + H2O = (3S)-3-hydroxy-3-methylglutaryl-CoA + CoA + H(+). Its pathway is metabolic intermediate biosynthesis; (R)-mevalonate biosynthesis; (R)-mevalonate from acetyl-CoA: step 2/3. Functionally, catalyzes the condensation of acetyl-CoA with acetoacetyl-CoA to form 3-hydroxy-3-methylglutaryl-CoA (HMG-CoA). Functions in the mevalonate (MVA) pathway leading to isopentenyl diphosphate (IPP), a key precursor for the biosynthesis of isoprenoid compounds that are building blocks of archaeal membrane lipids. The chain is Hydroxymethylglutaryl-CoA synthase from Methanocaldococcus jannaschii (strain ATCC 43067 / DSM 2661 / JAL-1 / JCM 10045 / NBRC 100440) (Methanococcus jannaschii).